A 316-amino-acid chain; its full sequence is Methionyl-tRNA formyltransferase (316 aa).

108–111 lines the (6S)-5,6,7,8-tetrahydrofolate pocket; that stretch reads SLLP.

It belongs to the Fmt family.

The catalysed reaction is L-methionyl-tRNA(fMet) + (6R)-10-formyltetrahydrofolate = N-formyl-L-methionyl-tRNA(fMet) + (6S)-5,6,7,8-tetrahydrofolate + H(+). In terms of biological role, attaches a formyl group to the free amino group of methionyl-tRNA(fMet). The formyl group appears to play a dual role in the initiator identity of N-formylmethionyl-tRNA by promoting its recognition by IF2 and preventing the misappropriation of this tRNA by the elongation apparatus. This Heliobacterium modesticaldum (strain ATCC 51547 / Ice1) protein is Methionyl-tRNA formyltransferase.